A 202-amino-acid chain; its full sequence is uncharacterized protein (202 aa).

The protein belongs to the NAD(P)H dehydrogenase (quinone) family.

This is an uncharacterized protein from Haemophilus influenzae (strain ATCC 51907 / DSM 11121 / KW20 / Rd).